We begin with the raw amino-acid sequence, 213 residues long: MSRVLVPCHVKSTVALQVGDMRTSQGRPGVLVVDVTFPNIAPFELQEIMFKNYYTAFLSIRVRQQSSMHTAAKWVTCLRDYCLMPDPHSEEGAQDYVSLFKHQMLCDMNRVLELRLILRQPSPLWLSFTVEELQIYQQGPKSPSLAFPKWLSHPVSNEQPAPRLEGLPDPSRVSSEVQQMWALTEMIRASHTSTRIGRFDVDGCYDLNLLSYT.

As to quaternary structure, part of the neuronal tubulin polyglutamylase complex which contains TPGS1, TPGS2, TTLL1, LRRC49 and NICN1. In terms of tissue distribution, high expression level is found in brain, testis, liver and kidney. Weak expression in spleen, leukocytes, small intestin and colon.

The protein resides in the nucleus. In Mus musculus (Mouse), this protein is Nicolin-1 (Nicn1).